The chain runs to 241 residues: Adapter protein MecA (241 aa).

A disordered region spans residues 115–141 (TDSNDKNNDDSSYMSDGNPADLNGYAN).

The protein belongs to the MecA family. As to quaternary structure, homodimer.

Functionally, enables the recognition and targeting of unfolded and aggregated proteins to the ClpC protease or to other proteins involved in proteolysis. The protein is Adapter protein MecA of Pediococcus pentosaceus (strain ATCC 25745 / CCUG 21536 / LMG 10740 / 183-1w).